The sequence spans 505 residues: Lysine--tRNA ligase (505 aa).

Positions 415 and 422 each coordinate Mg(2+).

The protein belongs to the class-II aminoacyl-tRNA synthetase family. As to quaternary structure, homodimer. The cofactor is Mg(2+).

It is found in the cytoplasm. It carries out the reaction tRNA(Lys) + L-lysine + ATP = L-lysyl-tRNA(Lys) + AMP + diphosphate. This chain is Lysine--tRNA ligase, found in Edwardsiella ictaluri (strain 93-146).